A 476-amino-acid chain; its full sequence is Proline--tRNA ligase 2 (476 aa).

Belongs to the class-II aminoacyl-tRNA synthetase family. ProS type 3 subfamily. Homodimer.

The protein resides in the cytoplasm. It carries out the reaction tRNA(Pro) + L-proline + ATP = L-prolyl-tRNA(Pro) + AMP + diphosphate. Functionally, catalyzes the attachment of proline to tRNA(Pro) in a two-step reaction: proline is first activated by ATP to form Pro-AMP and then transferred to the acceptor end of tRNA(Pro). The sequence is that of Proline--tRNA ligase 2 from Bacillus cereus (strain ATCC 14579 / DSM 31 / CCUG 7414 / JCM 2152 / NBRC 15305 / NCIMB 9373 / NCTC 2599 / NRRL B-3711).